We begin with the raw amino-acid sequence, 81 residues long: Costars family protein ABRACL (81 aa).

This sequence belongs to the costars family.

This is Costars family protein ABRACL from Coturnix coturnix (Common quail).